A 430-amino-acid chain; its full sequence is GTPase Obg (430 aa).

In terms of domain architecture, Obg spans 1–158 (MFVDQVKISL…LDVSLELKLL (158 aa)). Residues 118–145 (KGGRGGRGNSRFATPRNPAPDFSEKGEP) form a disordered region. Residues 159 to 329 (ADVGLVGFPS…LLYAIADKLE (171 aa)) enclose the OBG-type G domain. GTP is bound by residues 165–172 (GFPSVGKS), 190–194 (FTTIK), 212–215 (DLPG), 282–285 (NKMD), and 310–312 (STI). The Mg(2+) site is built by Ser172 and Thr192. An OCT domain is found at 352-430 (KHTPSQDKFT…ILGGEFEFVE (79 aa)).

It belongs to the TRAFAC class OBG-HflX-like GTPase superfamily. OBG GTPase family. Monomer. Requires Mg(2+) as cofactor.

It localises to the cytoplasm. In terms of biological role, an essential GTPase which binds GTP, GDP and possibly (p)ppGpp with moderate affinity, with high nucleotide exchange rates and a fairly low GTP hydrolysis rate. Plays a role in control of the cell cycle, stress response, ribosome biogenesis and in those bacteria that undergo differentiation, in morphogenesis control. This Staphylococcus aureus (strain bovine RF122 / ET3-1) protein is GTPase Obg.